The following is a 500-amino-acid chain: Cytochrome P450 monooxygenase hepD (500 aa).

The helical transmembrane segment at 15–35 threads the bilayer; it reads WILLSLSLAFIVVYSLFYLAV. N-linked (GlcNAc...) asparagine glycosylation is found at Asn-99, Asn-185, Asn-373, and Asn-409. Cys-445 contributes to the heme binding site. Asn-482 carries N-linked (GlcNAc...) asparagine glycosylation.

The protein belongs to the cytochrome P450 family. Requires heme as cofactor.

The protein resides in the membrane. It participates in secondary metabolite biosynthesis. In terms of biological role, cytochrome P450 monooxygenase; part of the gene cluster that mediates the biosynthesis of heptelidic acid (HA), a sesquiterpene lactone that acts as an inhibitor of glyceraldehyde-3-phosphatedehydrogenase (GAPDH) and a growth inhibitor of the salt-tolerant lactic acid bacteria in soy sauce brewing. The chain is Cytochrome P450 monooxygenase hepD from Aspergillus oryzae (strain ATCC 42149 / RIB 40) (Yellow koji mold).